A 1160-amino-acid polypeptide reads, in one-letter code: Protein GIGANTEA (1160 aa).

Residues 158–169 (CSSTSDQASSCE) are compositionally biased toward polar residues. Disordered stretches follow at residues 158-188 (CSST…RKPL), 600-629 (GGSK…RNRC), and 800-830 (PVKK…SRSH). The segment covering 170-187 (SMEKRANGSPRNEPDRKP) has biased composition (basic and acidic residues). A compositionally biased stretch (basic and acidic residues) spans 801–812 (VKKDEPPIEEKN).

It belongs to the GIGANTEA family.

The protein resides in the nucleus. Functionally, involved in regulation of circadian rhythm, and in the control of the photoperiodic flowering. Acts as a suppressor of flowering under short-day (SD) and long-day (LD) conditions. Activates Hd1/CONSTANS gene. This Oryza sativa subsp. japonica (Rice) protein is Protein GIGANTEA (GI).